A 181-amino-acid polypeptide reads, in one-letter code: Regulator of G-protein signaling 10 (181 aa).

The interval 1–35 (MFTRAVSRLSRKRPPSDIHDGDGSSSSGHQSLKST) is disordered. A phosphoserine mark is found at S24 and S41. The RGS domain occupies 41–156 (SLENLLEDPE…LKSDLFLKPK (116 aa)). The S-palmitoyl cysteine moiety is linked to residue C74. The disordered stretch occupies residues 155–181 (PKRTEEEEEEPPDAQTAAKRASRIYNT). S176 carries the post-translational modification Phosphoserine.

Interacts with GNAZ, GNAI1 and GNAI3. Associates specifically with the activated, GTP-bound forms of GNAZ and GNAI3.

It localises to the cytoplasm. The protein resides in the cytosol. It is found in the nucleus. Functionally, regulates G protein-coupled receptor signaling cascades, including signaling downstream of the muscarinic acetylcholine receptor CHRM2. Inhibits signal transduction by increasing the GTPase activity of G protein alpha subunits, thereby driving them into their inactive GDP-bound form. Modulates the activity of potassium channels that are activated in response to CHRM2 signaling. Activity on GNAZ is inhibited by palmitoylation of the G-protein. In Mus musculus (Mouse), this protein is Regulator of G-protein signaling 10 (Rgs10).